Consider the following 579-residue polypeptide: Protein inscuteable homolog (579 aa).

Positions 74–89 (SVQRWMEDLKLMTECE) are important for interaction with GPSM2. A PDZ-binding motif is present at residues 576 to 579 (ESFV).

As to quaternary structure, interacts with ALS2CR19/PAR3B and F2RL2/PAR3. Interacts with GPSM1/AGS3 and GPSM2/LGN (via TPR repeat region). Identified in a complex with GPSM2 and F2RL2. Isoform 1 is expressed in various tissues with stronger expression in liver, kidney and small intestine. Isoform 2 is abundantly expressed in small intestine and to a lower extent in lung and pancreas.

It is found in the cytoplasm. It localises to the cell cortex. Functionally, may function as an adapter linking the Par3 complex to the GPSM1/GPSM2 complex. Involved in spindle orientation during mitosis. May regulate cell proliferation and differentiation in the developing nervous system. May play a role in the asymmetric division of fibroblasts and participate in the process of stratification of the squamous epithelium. The chain is Protein inscuteable homolog (INSC) from Homo sapiens (Human).